A 288-amino-acid chain; its full sequence is Cyclic UMP-AMP synthase (288 aa).

The tract at residues 1–23 (MPVPESQLERWSHQGATTTAKKT) is disordered. Glutamine 46 is a UTP binding site. 46–48 (QGS) is a binding site for ATP. Residues aspartate 60 and aspartate 62 each coordinate Mg(2+). UTP is bound by residues aspartate 62 and 116–120 (RKTLK). Residue aspartate 129 coordinates Mg(2+). Asparagine 166 is a binding site for UTP. ATP is bound by residues lysine 194, serine 212, and glutamate 265.

Belongs to the CD-NTase family. E01 subfamily. Requires Mg(2+) as cofactor.

It catalyses the reaction UTP + ATP = 3',3'-cUAMP + 2 diphosphate. Functionally, cyclic nucleotide synthase (second messenger synthase) of a CBASS antivirus system. CBASS (cyclic oligonucleotide-based antiphage signaling system) provides immunity against bacteriophage. The CD-NTase protein synthesizes cyclic nucleotides in response to infection; these serve as specific second messenger signals. The signals activate a diverse range of effectors, leading to bacterial cell death and thus abortive phage infection. A type I-B(UU) CBASS system. In terms of biological role, cyclic dinucleotide synthase that catalyzes the synthesis of 3'3'-cyclic UMP-AMP (cUMP-AMP) from UTP and ATP, a second messenger for cell signal transduction. The sequence is that of Cyclic UMP-AMP synthase from Rhodothermus marinus (strain SG0.5JP17-172).